The following is a 325-amino-acid chain: N-acetyl-gamma-glutamyl-phosphate reductase (325 aa).

Residue Cys135 is part of the active site.

It belongs to the NAGSA dehydrogenase family. Type 1 subfamily.

The protein localises to the cytoplasm. The catalysed reaction is N-acetyl-L-glutamate 5-semialdehyde + phosphate + NADP(+) = N-acetyl-L-glutamyl 5-phosphate + NADPH + H(+). The protein operates within amino-acid biosynthesis; L-arginine biosynthesis; N(2)-acetyl-L-ornithine from L-glutamate: step 3/4. Its function is as follows. Catalyzes the NADPH-dependent reduction of N-acetyl-5-glutamyl phosphate to yield N-acetyl-L-glutamate 5-semialdehyde. The protein is N-acetyl-gamma-glutamyl-phosphate reductase of Flavobacterium johnsoniae (strain ATCC 17061 / DSM 2064 / JCM 8514 / BCRC 14874 / CCUG 350202 / NBRC 14942 / NCIMB 11054 / UW101) (Cytophaga johnsonae).